We begin with the raw amino-acid sequence, 635 residues long: Threonine--tRNA ligase (635 aa).

In terms of domain architecture, TGS spans 1–58 (MIHVTCNQEAFELPEGASAMDLANKMKQSHCFAGALINDQEKDLSTTLQDGDTVLFLT). The tract at residues 237-528 (DHRVLGTKLD…LIEHFKGRFP (292 aa)) is catalytic. Residues Cys-328, His-379, and His-505 each coordinate Zn(2+).

Belongs to the class-II aminoacyl-tRNA synthetase family. As to quaternary structure, homodimer. Zn(2+) is required as a cofactor.

The protein localises to the cytoplasm. It catalyses the reaction tRNA(Thr) + L-threonine + ATP = L-threonyl-tRNA(Thr) + AMP + diphosphate + H(+). Functionally, catalyzes the attachment of threonine to tRNA(Thr) in a two-step reaction: L-threonine is first activated by ATP to form Thr-AMP and then transferred to the acceptor end of tRNA(Thr). Also edits incorrectly charged L-seryl-tRNA(Thr). The sequence is that of Threonine--tRNA ligase from Chlamydia trachomatis serovar A (strain ATCC VR-571B / DSM 19440 / HAR-13).